Consider the following 419-residue polypeptide: UDP-N-acetylglucosamine 1-carboxyvinyltransferase (419 aa).

22 to 23 contributes to the phosphoenolpyruvate binding site; that stretch reads KN. Arg91 serves as a coordination point for UDP-N-acetyl-alpha-D-glucosamine. Catalysis depends on Cys115, which acts as the Proton donor. The residue at position 115 (Cys115) is a 2-(S-cysteinyl)pyruvic acid O-phosphothioketal. UDP-N-acetyl-alpha-D-glucosamine contacts are provided by residues 120–124, 160–163, Asp305, and Val327; these read RPVDL and KVSV.

This sequence belongs to the EPSP synthase family. MurA subfamily.

Its subcellular location is the cytoplasm. It catalyses the reaction phosphoenolpyruvate + UDP-N-acetyl-alpha-D-glucosamine = UDP-N-acetyl-3-O-(1-carboxyvinyl)-alpha-D-glucosamine + phosphate. It functions in the pathway cell wall biogenesis; peptidoglycan biosynthesis. Its function is as follows. Cell wall formation. Adds enolpyruvyl to UDP-N-acetylglucosamine. The protein is UDP-N-acetylglucosamine 1-carboxyvinyltransferase of Salmonella gallinarum (strain 287/91 / NCTC 13346).